Reading from the N-terminus, the 737-residue chain is MLKYALHSGGMPRNRLLRQLSAHIFRRSYSSNIRNIGILAHIDAGKTTTTERMLFYSGKTRSLGEVHRGNTVTDYLTQERERGITICSSAVTFPWRGNRINLLDTPGHIDFTMEVEQSLYAVDGVVVVLDGTAGVEAQTVTVWTQADKHKLPRLAFVNKMDRPDADFDKCVNDLRTKLETQPVCIQYPSKNQDGLLTINDVITLEQLTWQPKDLGRSYSKTKLEPSDDLRQLQEKRNELIDQLSGLDDELADVVISTESFDNVSNALIERALRRATCQQKVVPVLLGSAYKNVGIQRLMDAVNTYLPAPEERNQIYDCFGNEVAGKVFKIVHDKQRGPLTLVRILRGEIKRGMRLICSRGQAEVVSKLYEPLADEYREVGAVQSGDVVICAGLKSTVTGDLLTSSQTALRNAQKRLKQSQGTVSPDEDEELDTDELFGIDRQIPDAVYFCSIEPPSVSSQTAMEQALRQLQREDPSLRVSYDSVTGQTVLGGMGELHMDIIKSRILSEYKIDVDLGPLQIAYKETIESPSLTTLSVEKEIAGSKQNVSLTLEVVKDQGELFSLDKSPENLSNLNTLRPRTLQVIRKGSVSALERGPRVGGQVVDTQIRLHNAIIGRGTADSFVMATAAQCVQKLLSTSGTRLLEPIMALQIVAPSERISGIMADLSRRRALINDVLPKGERNKMILVNAPLAELSGYSSALRTISSGTASMTMQPSGFSGMNAVDESLAERRVQGLE.

A mitochondrion-targeting transit peptide spans Met1–Tyr29. One can recognise a tr-type G domain in the interval Ser31–Glu310. Residues Ala40–Thr47, Asp104–His108, and Asn158–Asp161 each bind GTP.

It belongs to the TRAFAC class translation factor GTPase superfamily. Classic translation factor GTPase family. EF-G/EF-2 subfamily.

It is found in the mitochondrion. Mitochondrial GTPase that mediates the disassembly of ribosomes from messenger RNA at the termination of mitochondrial protein biosynthesis. Not involved in the GTP-dependent ribosomal translocation step during translation elongation. The protein is Ribosome-releasing factor 2, mitochondrial of Drosophila pseudoobscura pseudoobscura (Fruit fly).